The sequence spans 318 residues: Methionyl-tRNA formyltransferase (318 aa).

Residue 110 to 113 participates in (6S)-5,6,7,8-tetrahydrofolate binding; it reads SLLP.

It belongs to the Fmt family.

It catalyses the reaction L-methionyl-tRNA(fMet) + (6R)-10-formyltetrahydrofolate = N-formyl-L-methionyl-tRNA(fMet) + (6S)-5,6,7,8-tetrahydrofolate + H(+). Functionally, attaches a formyl group to the free amino group of methionyl-tRNA(fMet). The formyl group appears to play a dual role in the initiator identity of N-formylmethionyl-tRNA by promoting its recognition by IF2 and preventing the misappropriation of this tRNA by the elongation apparatus. This is Methionyl-tRNA formyltransferase from Ligilactobacillus salivarius (strain UCC118) (Lactobacillus salivarius).